A 361-amino-acid chain; its full sequence is Chorismate synthase (361 aa).

2 residues coordinate NADP(+): arginine 48 and arginine 54. FMN contacts are provided by residues 125–127, 238–239, glycine 278, 293–297, and arginine 319; these read RSS, NA, and KPTSS.

The protein belongs to the chorismate synthase family. As to quaternary structure, homotetramer. FMNH2 is required as a cofactor.

It carries out the reaction 5-O-(1-carboxyvinyl)-3-phosphoshikimate = chorismate + phosphate. The protein operates within metabolic intermediate biosynthesis; chorismate biosynthesis; chorismate from D-erythrose 4-phosphate and phosphoenolpyruvate: step 7/7. In terms of biological role, catalyzes the anti-1,4-elimination of the C-3 phosphate and the C-6 proR hydrogen from 5-enolpyruvylshikimate-3-phosphate (EPSP) to yield chorismate, which is the branch point compound that serves as the starting substrate for the three terminal pathways of aromatic amino acid biosynthesis. This reaction introduces a second double bond into the aromatic ring system. The sequence is that of Chorismate synthase from Escherichia coli O157:H7.